The sequence spans 494 residues: Alpha-amylase-related protein (494 aa).

Residues 1–20 form the signal peptide; sequence MFKFALALTLCLAGASLSLA. Glutamine 21 carries the pyrrolidone carboxylic acid modification. A disulfide bridge links cysteine 48 with cysteine 104. 3 residues coordinate Ca(2+): asparagine 118, glutamine 169, and aspartate 178. Cysteines 157 and 171 form a disulfide. A chloride-binding site is contributed by arginine 206. Residue aspartate 208 is the Nucleophile of the active site. Histidine 212 provides a ligand contact to Ca(2+). Catalysis depends on glutamate 245, which acts as the Proton donor. Positions 308 and 343 each coordinate chloride. Intrachain disulfides connect cysteine 376–cysteine 382, cysteine 418–cysteine 441, and cysteine 448–cysteine 460.

Belongs to the glycosyl hydrolase 13 family. Monomer. Ca(2+) serves as cofactor. It depends on chloride as a cofactor.

It is found in the secreted. It catalyses the reaction Endohydrolysis of (1-&gt;4)-alpha-D-glucosidic linkages in polysaccharides containing three or more (1-&gt;4)-alpha-linked D-glucose units.. This is Alpha-amylase-related protein (Amyrel) from Drosophila punjabiensis (Fruit fly).